The primary structure comprises 654 residues: Fructose-1,6-bisphosphatase class 3 (654 aa).

This sequence belongs to the FBPase class 3 family. It depends on Mn(2+) as a cofactor.

It carries out the reaction beta-D-fructose 1,6-bisphosphate + H2O = beta-D-fructose 6-phosphate + phosphate. It functions in the pathway carbohydrate biosynthesis; gluconeogenesis. The polypeptide is Fructose-1,6-bisphosphatase class 3 (Staphylococcus epidermidis (strain ATCC 35984 / DSM 28319 / BCRC 17069 / CCUG 31568 / BM 3577 / RP62A)).